The sequence spans 197 residues: Beta-crystallin A2 (197 aa).

The N-terminal arm stretch occupies residues 1–11; it reads MSSAPAPGPAP. 2 consecutive Beta/gamma crystallin 'Greek key' domains span residues 12-52 and 53-99; these read ASLT…KVEN and GVWV…RPVL. Residues 100-105 form a connecting peptide region; sequence CANHND. 2 consecutive Beta/gamma crystallin 'Greek key' domains span residues 106-147 and 148-196; these read SRVT…KVSS and GAWV…RRVQ.

Belongs to the beta/gamma-crystallin family. As to quaternary structure, homo/heterodimer, or complexes of higher-order. The structure of beta-crystallin oligomers seems to be stabilized through interactions between the N-terminal arms.

Functionally, crystallins are the dominant structural components of the vertebrate eye lens. This chain is Beta-crystallin A2 (CRYBA2), found in Homo sapiens (Human).